Reading from the N-terminus, the 277-residue chain is Phosphatidylglycerol--prolipoprotein diacylglyceryl transferase (277 aa).

The next 4 membrane-spanning stretches (helical) occupy residues 18–38 (ISVK…LLLA), 51–71 (IIVD…RIYY), 89–109 (IWHG…TAII), and 116–136 (ISFW…QAIG). Position 137 (Arg137) interacts with a 1,2-diacyl-sn-glycero-3-phospho-(1'-sn-glycerol). 3 helical membrane-spanning segments follow: residues 177–197 (QPTF…LLII), 205–225 (GELF…IEGM), and 235–255 (FRVS…IIIY).

It belongs to the Lgt family.

It localises to the cell membrane. It catalyses the reaction L-cysteinyl-[prolipoprotein] + a 1,2-diacyl-sn-glycero-3-phospho-(1'-sn-glycerol) = an S-1,2-diacyl-sn-glyceryl-L-cysteinyl-[prolipoprotein] + sn-glycerol 1-phosphate + H(+). Its pathway is protein modification; lipoprotein biosynthesis (diacylglyceryl transfer). In terms of biological role, catalyzes the transfer of the diacylglyceryl group from phosphatidylglycerol to the sulfhydryl group of the N-terminal cysteine of a prolipoprotein, the first step in the formation of mature lipoproteins. This Listeria monocytogenes serovar 1/2a (strain ATCC BAA-679 / EGD-e) protein is Phosphatidylglycerol--prolipoprotein diacylglyceryl transferase.